We begin with the raw amino-acid sequence, 426 residues long: Stationary phase-inducible protein CsiE (426 aa).

PRD domains lie at 120–225 (ARNF…DPLR) and 229–336 (QRDR…ENDL).

The chain is Stationary phase-inducible protein CsiE (csiE) from Escherichia coli (strain K12).